The sequence spans 93 residues: MSRSVKKGPALCPKLMKKVEVASATNQKSIIKTWARWSTITPLMVGLNVGVHDGRRHVPIYITENMVGHKLGEFTTTRNFRGHAKAEKVSQVK.

It belongs to the universal ribosomal protein uS19 family.

Protein S19 forms a complex with S13 that binds strongly to the 16S ribosomal RNA. In Dehalococcoides mccartyi (strain ATCC BAA-2100 / JCM 16839 / KCTC 5957 / BAV1), this protein is Small ribosomal subunit protein uS19.